The chain runs to 123 residues: uncharacterized protein (123 aa).

A helical transmembrane segment spans residues 34 to 53 (LPFFFLFLGNLGKFFFLWPL).

Its subcellular location is the membrane. This is an uncharacterized protein from Saccharomyces cerevisiae (strain ATCC 204508 / S288c) (Baker's yeast).